The sequence spans 368 residues: Histidinol-phosphate aminotransferase (368 aa).

Lys228 carries the post-translational modification N6-(pyridoxal phosphate)lysine.

It belongs to the class-II pyridoxal-phosphate-dependent aminotransferase family. Histidinol-phosphate aminotransferase subfamily. In terms of assembly, homodimer. It depends on pyridoxal 5'-phosphate as a cofactor.

The catalysed reaction is L-histidinol phosphate + 2-oxoglutarate = 3-(imidazol-4-yl)-2-oxopropyl phosphate + L-glutamate. The protein operates within amino-acid biosynthesis; L-histidine biosynthesis; L-histidine from 5-phospho-alpha-D-ribose 1-diphosphate: step 7/9. This is Histidinol-phosphate aminotransferase (hisC) from Methylobacillus flagellatus.